Here is a 264-residue protein sequence, read N- to C-terminus: Wtf element wtf11 (264 aa).

The span at 1–12 (MNSNYVPLTSSV) shows a compositional bias: polar residues. A disordered region spans residues 1-26 (MNSNYVPLTSSVDVEEKMESENGVDL). 4 helical membrane passes run 107–127 (LLFV…VIFG), 145–165 (LSWF…YDFW), 180–200 (WKNT…GFFV), and 217–237 (SLFA…FETL).

The protein belongs to the WTF family.

It localises to the membrane. May act in meiotic drive. The sequence is that of Wtf element wtf11 from Schizosaccharomyces pombe (strain 972 / ATCC 24843) (Fission yeast).